Here is a 214-residue protein sequence, read N- to C-terminus: 3,4-dihydroxy-2-butanone 4-phosphate synthase (214 aa).

D-ribulose 5-phosphate-binding positions include 37 to 38, Asp-42, 150 to 154, and Glu-174; these read RE and RRGHT. Glu-38 provides a ligand contact to Mg(2+). His-153 serves as a coordination point for Mg(2+).

Belongs to the DHBP synthase family. As to quaternary structure, homodimer. It depends on Mg(2+) as a cofactor. The cofactor is Mn(2+).

It catalyses the reaction D-ribulose 5-phosphate = (2S)-2-hydroxy-3-oxobutyl phosphate + formate + H(+). It functions in the pathway cofactor biosynthesis; riboflavin biosynthesis; 2-hydroxy-3-oxobutyl phosphate from D-ribulose 5-phosphate: step 1/1. Its function is as follows. Catalyzes the conversion of D-ribulose 5-phosphate to formate and 3,4-dihydroxy-2-butanone 4-phosphate. The sequence is that of 3,4-dihydroxy-2-butanone 4-phosphate synthase from Nitratidesulfovibrio vulgaris (strain ATCC 29579 / DSM 644 / CCUG 34227 / NCIMB 8303 / VKM B-1760 / Hildenborough) (Desulfovibrio vulgaris).